A 1783-amino-acid chain; its full sequence is MKADLATAKGSSPAFSAPRTYRARLLSRCLNKCFNTVLVSGGAAESRFRGGATVGKAGAHDARGVGDLVDFLQQEATPYEVNVPPYLILPPLKSNEATTHRRAGDSGGQGPAAAGGRGQARHGRRQAAASAATTVSAAPQTGATKPAATAKTTPQRPRGSDADAGSRAQSQYGFGDPPGGGALKGAVDAASDAAPDVAAASPAPAGISDQLSTPACPPEREPQAGKPRASGRAPAAPGVGPQDVGGGSGACAPAPDESHMGLTHRDQGHDERISQTAGEAWKAGAVAAPPAAPTPSPPGLAAAPTRLASSALGTHSSDGDMRRAVPGRDTPSLSAVAGPVTLSGSSSSSSGRNSSSNSNTSTSSTSNGVTITSNVGVNGASPQERLMAARRAVVTMQWNTHLGRRGRSFAPLPTGGMSIATSAASSSTSSASSSSSMNDGSNAKKTSDAAVSLPVGQQPAAEQPHVPTAPGGPSQTGASAVAAQAPSSAMPTAAMAATMGSATIGSAATLPTAAVVSSAAAEGTQPSGLLLAGGRPALLGRTIQGRIARLQAAREALRAARHARVGAAMQPPPVQARPVQGQSGQVPQVGQGPVQSQPGRRQEPAASATKLHVADGLPARPVQPAVSATDLQTDTATAASAPFPVSDASLGSTEPLAASAPTTSLASASGPAIGTSSSNAHSSAAASEAAAGTVRAPTDTAAPAASPAATAPALASTPFATPAAAPLPEPPEVVAARDLLGRLSRYQPAGRDDGPAVLAPHARYSPAAYQAAAAAAAAQPQLLLAPLSLPQLAAVVAGYAAAGHRHEPLLEALAGVALAKAGGAGGIGGGAAGAVPRGQAASELKRSRLTFRAACVFLTALARLGYRGGAVTRLAAALAVWLARQLNTGAVTPRAKWKGTWLAAALWAYATLEQLPAAAPTPPPPPASAAAASTAPRAAESRPAAAPAPAEATATRTPLLTAPQLAPQRASASPDLELARGGVLLFTEAAEAVRVAPGWLHLMDGREALWSLWAFRKAAAAYGRGEGTASGAVYVAAAGGYAMLQSGGAGGGGMGQAGGAGRGGAGAGAAALPLVVAAPRYEANPLVELKLADRATSLFPQLDPGQLAEAHVLLLECGLAEDELPQALTALRRCVIARADSIRPQPLAVMVATLAVMQVRDVVWLSALAMACRNKMINMSPDQIVAVLHAFGSVLRFHHLLLFHAAAVVCSCPGMWRLGGMGAGEVLRLVGAFAATRHYEGRLLRAAAERMLQLGSTGSTAGQRAGLLQSLCSLHYRHNGLLRIVVADTFGLADLSPGSAGQPRNMGSSAKLAGAGTAAAAGAAAPGLPPSLLVAVAEACGQLQHRPPGLLQALHASRAAVWPRVGLAQRATLCWALLVLTGGLPAQYLPADRPRDAKRHVRQSAAAAAAAAAAAQDQRQEQHQQHQQEQLLAKALVEYLQALGAGVQRWPPPAPSSYHLQLLVACTVLASCTPPPAPAHMQQQPQSSGTGCQKSRRRRMRYRRSRGAVLQQQLKEELDKLPASAMQRALEVQRRARSAALGGWAHEVASVVREVLQEASVDARADSEGRQPLPPHWLGQPPATLLSAAVSTGVEVCDGAMLVDVAVELEVEAGLPRPQVKGRGRGRRTAARATTDVQGAEQAVVTEEAAYEHSHPLRQRLQLALDLCPLPPPPPRTAAPVLSAAYAPGAGGAGTSATAEVTANRTTGAPRSLAVGAAAGGAVIRNSRWLLSGAGALRRRLLTHAGWLVVPVRERQWKDLRSAEQQRRVVREWLKAVLLHAQQ.

The transit peptide at Met1–Ser40 directs the protein to the chloroplast. Disordered regions lie at residues Ala97–Asn378, Ala420–Gln484, Ala563–Lys610, Ser652–Ala709, Ala918–Ser971, Arg1395–Gln1427, Pro1476–Arg1506, and Val1620–Gly1639. The span at Asp105–Gly118 shows a compositional bias: gly residues. Low complexity-rich tracts occupy residues Gln126–Pro157, Ala186–Ala205, and Ala224–Gln242. Basic and acidic residues predominate over residues Asp256–Ile273. The segment covering Ala277–Pro289 has biased composition (low complexity). Residues Leu307–Ser316 are compositionally biased toward polar residues. 7 stretches are compositionally biased toward low complexity: residues Ser343–Asn374, Ala420–Ser436, Arg577–Gly599, Pro655–Ser669, Ser676–Ala709, Ser928–Ala970, and Gln1403–Asp1417. Basic residues-rich tracts occupy residues Lys1494 to Arg1506 and Val1620 to Ala1630. One can recognise an RAP domain in the interval Leu1713–Glu1772.

In terms of assembly, part of a 1700 kDa complex that includes the precursor RNA to exon 1 and the tscA RNA.

It is found in the plastid. Its subcellular location is the chloroplast stroma. Required for trans-splicing of exons 1 and 2 of the chloroplast encoded psaA mRNA (a group II intron). May be required for stability of the chloroplast RNA-protein complex in which it is found. The protein is Trans-splicing factor Raa3, chloroplastic (RAA3) of Chlamydomonas reinhardtii (Chlamydomonas smithii).